We begin with the raw amino-acid sequence, 438 residues long: MASLRLSVLLVSVSWLLLLVSGLRAGPRTLVLMENINLRETHSLFFRSLSDRGFDLSFKTADDPSLSLIKYGEFLYDNLIIFSPSVEDFGGNINIETISSFIDGGGSVLVAASSDIGDPLRELGSECGIEFDEEKTAVIDHHNYDISDPGQHTLIVADSENLLKAPTIVGKTPLNPILFRGVGMVADPDNPLVLDILTGSSTSYSFFPDKPITQYPHAVGKNTLLIAGLQARNNARVVFSGSLDFFSDSFFNSAVQKAASGSNRYAKTGNYELAMALSRWVFKEEGVLRVGEVSHHRVGESSPPSAYTVTDLVEYSIVIEKLSDGKWVPFDGDDIQLEFVRIDPFVRTFLKKNGGKYSVQFKLPDVYGVFQFKVDYNRLGYTHLYSTTQISVRPLQHTQYERFIPSAYPYYASAFSVMFGLFIFSIVFLHMKEKEKSD.

Residues 1 to 25 (MASLRLSVLLVSVSWLLLLVSGLRA) form the signal peptide. Topologically, residues 26-408 (GPRTLVLMEN…QYERFIPSAY (383 aa)) are lumenal. A helical transmembrane segment spans residues 409–429 (PYYASAFSVMFGLFIFSIVFL). The Cytoplasmic segment spans residues 430–438 (HMKEKEKSD).

It belongs to the DDOST 48 kDa subunit family. In terms of assembly, component of the oligosaccharyltransferase (OST) complex.

The protein resides in the endoplasmic reticulum membrane. The protein operates within protein modification; protein glycosylation. Its function is as follows. Subunit of the oligosaccharyl transferase (OST) complex that catalyzes the initial transfer of a defined glycan (Glc(3)Man(9)GlcNAc(2) in eukaryotes) from the lipid carrier dolichol-pyrophosphate to an asparagine residue within an Asn-X-Ser/Thr consensus motif in nascent polypeptide chains, the first step in protein N-glycosylation. N-glycosylation occurs cotranslationally and the complex associates with the Sec61 complex at the channel-forming translocon complex that mediates protein translocation across the endoplasmic reticulum (ER). All subunits are required for a maximal enzyme activity. Required for the assembly of both SST3A- and SS3B-containing OST complexes. This is Dolichyl-diphosphooligosaccharide--protein glycosyltransferase 48 kDa subunit from Xenopus laevis (African clawed frog).